A 245-amino-acid chain; its full sequence is Protein FAM133B (245 aa).

Disordered regions lie at residues 19–38 (SRGP…NRPR) and 69–245 (WKKE…SDSP). Basic and acidic residues predominate over residues 69–80 (WKKELEKHREKL). Ser-82 carries the phosphoserine modification. Positions 89–102 (KKRQKKKKEKKKSG) are enriched in basic residues. The span at 103 to 119 (RYSSSSSSSSDSSSSSS) shows a compositional bias: low complexity. Over residues 128–140 (QTKRRKKKKSHCH) the composition is skewed to basic residues. The span at 165-176 (KDITEREKDTKG) shows a compositional bias: basic and acidic residues. 4 positions are modified to phosphoserine: Ser-190, Ser-191, Ser-193, and Ser-195. A compositionally biased stretch (basic and acidic residues) spans 209-219 (SGEERERTTDK). A compositionally biased stretch (basic residues) spans 220–237 (AKKRRKHKKHSKKKKKKA).

The protein belongs to the FAM133 family.

The polypeptide is Protein FAM133B (Fam133b) (Rattus norvegicus (Rat)).